Here is a 510-residue protein sequence, read N- to C-terminus: 2,3-bisphosphoglycerate-independent phosphoglycerate mutase (510 aa).

Residues aspartate 11 and serine 61 each coordinate Mn(2+). Serine 61 (phosphoserine intermediate) is an active-site residue. Residues histidine 124, 154-155 (RD), arginine 185, arginine 191, 260-263 (RPDR), and lysine 333 contribute to the substrate site. Mn(2+)-binding residues include aspartate 398, histidine 402, aspartate 439, histidine 440, and histidine 457.

The protein belongs to the BPG-independent phosphoglycerate mutase family. As to quaternary structure, monomer. Mn(2+) serves as cofactor.

It catalyses the reaction (2R)-2-phosphoglycerate = (2R)-3-phosphoglycerate. It functions in the pathway carbohydrate degradation; glycolysis; pyruvate from D-glyceraldehyde 3-phosphate: step 3/5. In terms of biological role, catalyzes the interconversion of 2-phosphoglycerate and 3-phosphoglycerate. The polypeptide is 2,3-bisphosphoglycerate-independent phosphoglycerate mutase (Mycoplasma mobile (strain ATCC 43663 / 163K / NCTC 11711) (Mesomycoplasma mobile)).